A 589-amino-acid polypeptide reads, in one-letter code: Probable translation initiation factor IF-2 (589 aa).

One can recognise a tr-type G domain in the interval 3-224 (VRSPFVVVMG…AGVSQRFIPR (222 aa)). The tract at residues 12–19 (GHVDVGKT) is G1. 12–19 (GHVDVGKT) lines the GTP pocket. Positions 37–41 (MITQH) are G2. Residues 78–81 (DTPG) are G3. Residues 78–82 (DTPGH) and 132–135 (NKLD) contribute to the GTP site. The G4 stretch occupies residues 132-135 (NKLD). The interval 200-202 (SAV) is G5.

Belongs to the TRAFAC class translation factor GTPase superfamily. Classic translation factor GTPase family. IF-2 subfamily.

Functionally, function in general translation initiation by promoting the binding of the formylmethionine-tRNA to ribosomes. Seems to function along with eIF-2. In Pyrobaculum neutrophilum (strain DSM 2338 / JCM 9278 / NBRC 100436 / V24Sta) (Thermoproteus neutrophilus), this protein is Probable translation initiation factor IF-2.